The primary structure comprises 470 residues: Synaptotagmin-17 (470 aa).

The interval 54-112 (PPWLMASRSNDKDGDSVHTASDVPLTPRTNSPDGRRSSSDTSKSTYSLTRRISSLDSRR) is disordered. Over residues 92–112 (SDTSKSTYSLTRRISSLDSRR) the composition is skewed to low complexity. A phosphoserine mark is found at Ser114 and Ser115. 2 consecutive C2 domains span residues 180–306 (QLGM…HWWK) and 317–451 (ELGE…EQWH).

It belongs to the synaptotagmin family.

The protein localises to the membrane. In terms of biological role, plays a role in dendrite formation by melanocytes. The chain is Synaptotagmin-17 (Syt17) from Mus musculus (Mouse).